We begin with the raw amino-acid sequence, 126 residues long: UPF0235 protein C15orf40 homolog (126 aa).

A disordered region spans residues 1 to 32; sequence MPKKAGATSKGKNQTKEPETAPPAAGPVATDP. Phosphoserine is present on Ser89.

It belongs to the UPF0235 family.

This chain is UPF0235 protein C15orf40 homolog, found in Mus musculus (Mouse).